Here is a 337-residue protein sequence, read N- to C-terminus: Calcium-binding protein 39-like (337 aa).

This sequence belongs to the Mo25 family. In terms of assembly, component of a trimeric complex composed of STK11/LKB1, STRAD (STRADA or STRADB) and CAB39/MO25 (CAB39/MO25alpha or CAB39L/MO25beta): the complex tethers STK11/LKB1 in the cytoplasm and stimulates its catalytic activity.

In terms of biological role, component of a complex that binds and activates STK11/LKB1. In the complex, required to stabilize the interaction between CAB39/MO25 (CAB39/MO25alpha or CAB39L/MO25beta) and STK11/LKB1. The sequence is that of Calcium-binding protein 39-like (Cab39l) from Mus musculus (Mouse).